The following is a 376-amino-acid chain: Flap endonuclease 1 (376 aa).

Residues 1-105 (MGIKGLSKLL…GELHKRKENA (105 aa)) are N-domain. Aspartate 34 serves as a coordination point for Mg(2+). DNA is bound by residues arginine 47 and arginine 71. The Mg(2+) site is built by aspartate 87, glutamate 159, glutamate 161, aspartate 180, and aspartate 182. The I-domain stretch occupies residues 123 to 254 (QAKKLMKRTA…ITAFELIQQY (132 aa)). DNA is bound at residue glutamate 159. The DNA site is built by glycine 232 and aspartate 234. Aspartate 234 contacts Mg(2+). The interaction with PCNA stretch occupies residues 336–344 (AQGRLDSFF). The disordered stretch occupies residues 354 to 376 (SEAASGVKRKKPTTKAKESRKKK). Residues 360-376 (VKRKKPTTKAKESRKKK) show a composition bias toward basic residues.

The protein belongs to the XPG/RAD2 endonuclease family. FEN1 subfamily. In terms of assembly, interacts with PCNA. Three molecules of FEN1 bind to one PCNA trimer with each molecule binding to one PCNA monomer. PCNA stimulates the nuclease activity without altering cleavage specificity. The cofactor is Mg(2+). Post-translationally, phosphorylated. Phosphorylation upon DNA damage induces relocalization to the nuclear plasma.

It localises to the nucleus. It is found in the nucleolus. The protein resides in the nucleoplasm. Its subcellular location is the mitochondrion. Functionally, structure-specific nuclease with 5'-flap endonuclease and 5'-3' exonuclease activities involved in DNA replication and repair. During DNA replication, cleaves the 5'-overhanging flap structure that is generated by displacement synthesis when DNA polymerase encounters the 5'-end of a downstream Okazaki fragment. It enters the flap from the 5'-end and then tracks to cleave the flap base, leaving a nick for ligation. Also involved in the long patch base excision repair (LP-BER) pathway, by cleaving within the apurinic/apyrimidinic (AP) site-terminated flap. Acts as a genome stabilization factor that prevents flaps from equilibrating into structures that lead to duplications and deletions. Also possesses 5'-3' exonuclease activity on nicked or gapped double-stranded DNA, and exhibits RNase H activity. Also involved in replication and repair of rDNA and in repairing mitochondrial DNA. In Entamoeba histolytica (strain ATCC 30459 / HM-1:IMSS / ABRM), this protein is Flap endonuclease 1.